Here is a 225-residue protein sequence, read N- to C-terminus: UPF0758 protein BCE_4545 (225 aa).

An MPN domain is found at 103 to 225; that stretch reads SIRSPEDCAT…FVSLKEKGHI (123 aa). Residues His-174, His-176, and Asp-187 each contribute to the Zn(2+) site. A JAMM motif motif is present at residues 174–187; that stretch reads HNHPSGDPAPSRED.

It belongs to the UPF0758 family.

The protein is UPF0758 protein BCE_4545 of Bacillus cereus (strain ATCC 10987 / NRS 248).